The primary structure comprises 123 residues: Steroid Delta-isomerase (123 aa).

Y12 functions as the Proton donor in the catalytic mechanism. D36 acts as the Proton acceptor in catalysis. D96 contacts substrate.

Homodimer.

It catalyses the reaction a 3-oxo-Delta(5)-steroid = a 3-oxo-Delta(4)-steroid. The sequence is that of Steroid Delta-isomerase (ksdI) from Nocardioides simplex (Arthrobacter simplex).